A 152-amino-acid polypeptide reads, in one-letter code: Small ribosomal subunit protein uS15 (152 aa).

The protein belongs to the universal ribosomal protein uS15 family. Part of the 30S ribosomal subunit.

This is Small ribosomal subunit protein uS15 from Methanocorpusculum labreanum (strain ATCC 43576 / DSM 4855 / Z).